Consider the following 516-residue polypeptide: Exodeoxyribonuclease 7 large subunit (516 aa).

Belongs to the XseA family. In terms of assembly, heterooligomer composed of large and small subunits.

Its subcellular location is the cytoplasm. The catalysed reaction is Exonucleolytic cleavage in either 5'- to 3'- or 3'- to 5'-direction to yield nucleoside 5'-phosphates.. Functionally, bidirectionally degrades single-stranded DNA into large acid-insoluble oligonucleotides, which are then degraded further into small acid-soluble oligonucleotides. The sequence is that of Exodeoxyribonuclease 7 large subunit from Chlamydia trachomatis serovar A (strain ATCC VR-571B / DSM 19440 / HAR-13).